The primary structure comprises 197 residues: ATP synthase subunit delta (197 aa).

Over residues 1–16 (MSSAVSASPQAASPQQ) the composition is skewed to low complexity. Residues 1–20 (MSSAVSASPQAASPQQDRTS) form a disordered region.

The protein belongs to the ATPase delta chain family. F-type ATPases have 2 components, F(1) - the catalytic core - and F(0) - the membrane proton channel. F(1) has five subunits: alpha(3), beta(3), gamma(1), delta(1), epsilon(1). F(0) has three main subunits: a(1), b(2) and c(10-14). The alpha and beta chains form an alternating ring which encloses part of the gamma chain. F(1) is attached to F(0) by a central stalk formed by the gamma and epsilon chains, while a peripheral stalk is formed by the delta and b chains.

Its subcellular location is the cell inner membrane. Its function is as follows. F(1)F(0) ATP synthase produces ATP from ADP in the presence of a proton or sodium gradient. F-type ATPases consist of two structural domains, F(1) containing the extramembraneous catalytic core and F(0) containing the membrane proton channel, linked together by a central stalk and a peripheral stalk. During catalysis, ATP synthesis in the catalytic domain of F(1) is coupled via a rotary mechanism of the central stalk subunits to proton translocation. This protein is part of the stalk that links CF(0) to CF(1). It either transmits conformational changes from CF(0) to CF(1) or is implicated in proton conduction. The protein is ATP synthase subunit delta of Acidiphilium cryptum (strain JF-5).